The following is a 201-amino-acid chain: Molybdenum cofactor guanylyltransferase (201 aa).

GTP contacts are provided by residues 15 to 17, K28, D74, and D104; that span reads LCG. Mg(2+) is bound at residue D104.

The protein belongs to the MobA family. As to quaternary structure, monomer. Requires Mg(2+) as cofactor.

It is found in the cytoplasm. It carries out the reaction Mo-molybdopterin + GTP + H(+) = Mo-molybdopterin guanine dinucleotide + diphosphate. Functionally, transfers a GMP moiety from GTP to Mo-molybdopterin (Mo-MPT) cofactor (Moco or molybdenum cofactor) to form Mo-molybdopterin guanine dinucleotide (Mo-MGD) cofactor. The protein is Molybdenum cofactor guanylyltransferase of Ectopseudomonas mendocina (strain ymp) (Pseudomonas mendocina).